The chain runs to 445 residues: Hydroxymethylglutaryl-CoA synthase (445 aa).

Aspartate 31 serves as a coordination point for (3S)-3-hydroxy-3-methylglutaryl-CoA. Glutamate 83 serves as the catalytic Proton donor/acceptor. (3S)-3-hydroxy-3-methylglutaryl-CoA-binding residues include cysteine 120, threonine 163, serine 211, histidine 244, lysine 253, asparagine 328, and serine 364. Cysteine 120 functions as the Acyl-thioester intermediate in the catalytic mechanism. Histidine 244 (proton donor/acceptor) is an active-site residue.

The protein belongs to the thiolase-like superfamily. HMG-CoA synthase family.

It carries out the reaction acetoacetyl-CoA + acetyl-CoA + H2O = (3S)-3-hydroxy-3-methylglutaryl-CoA + CoA + H(+). It functions in the pathway metabolic intermediate biosynthesis; (R)-mevalonate biosynthesis; (R)-mevalonate from acetyl-CoA: step 2/3. Its activity is regulated as follows. In contrast to bacterial and eukaryotic HMG-CoA synthases, is insensitive to feedback substrate inhibition by acetoacetyl-CoA. Enzymatic activity is inhibited by hymeglusin, which also blocks the propagation of H.volcanii cells in vivo, indicating the critical role that the mevalonate pathway plays in isoprenoid biosynthesis by these archaea. Functionally, catalyzes the condensation of acetyl-CoA with acetoacetyl-CoA to form 3-hydroxy-3-methylglutaryl-CoA (HMG-CoA). Functions in the mevalonate (MVA) pathway leading to isopentenyl diphosphate (IPP), a key precursor for the biosynthesis of isoprenoid compounds such as archaeal membrane lipids. This Haloferax volcanii (strain ATCC 29605 / DSM 3757 / JCM 8879 / NBRC 14742 / NCIMB 2012 / VKM B-1768 / DS2) (Halobacterium volcanii) protein is Hydroxymethylglutaryl-CoA synthase (hmgB).